A 488-amino-acid chain; its full sequence is Inositol 1,3,4-trisphosphate 5/6-kinase 4 (488 aa).

Residues Lys208 and Lys224 each contribute to the 1D-myo-inositol 1,3,4-trisphosphate site. One can recognise an ATP-grasp domain in the interval 246-488; the sequence is NACAIVDPIR…RFDQHVQEKH (243 aa). ATP-binding residues include Arg263 and Lys315. Residues His326 and Lys360 each coordinate 1D-myo-inositol 1,3,4-trisphosphate. ATP contacts are provided by residues 349-360, Ser375, and Ser398; that span reads QEYVDHSSRIFK. Mg(2+) is bound by residues Asp439, Asp453, and Asn455. 1D-myo-inositol 1,3,4-trisphosphate contacts are provided by Asn455 and Ser459.

It belongs to the ITPK1 family. In terms of assembly, monomer. The cofactor is Mg(2+). Expressed in roots, leaf vasculature, cauline leaves, flower buds and siliques.

It carries out the reaction 1D-myo-inositol 1,3,4-trisphosphate + ATP = 1D-myo-inositol 1,3,4,5-tetrakisphosphate + ADP + H(+). The enzyme catalyses 1D-myo-inositol 1,3,4-trisphosphate + ATP = 1D-myo-inositol 1,3,4,6-tetrakisphosphate + ADP + H(+). Functionally, kinase that can phosphorylate the inositol polyphosphate Ins(1,3,4)P3 to form InsP4. Also phosphorylates a racemic mixture of Ins(1,4,6)P3 and Ins(3,4,6)P3 to form InsP4. Does not display inositol 3,4,5,6-tetrakisphosphate 1-kinase activity, but possesses inositol 1,4,5,6-tetrakisphosphate and inositol 1,3,4,5-tetrakisphosphate isomerase activity. Ins(1,3,4,6)P4 is an essential molecule in the hexakisphosphate (InsP6) pathway. This chain is Inositol 1,3,4-trisphosphate 5/6-kinase 4 (ITPK4), found in Arabidopsis thaliana (Mouse-ear cress).